A 194-amino-acid chain; its full sequence is ATP-dependent Clp protease proteolytic subunit (194 aa).

The active-site Nucleophile is the S99. Residue H124 is part of the active site.

Belongs to the peptidase S14 family. Fourteen ClpP subunits assemble into 2 heptameric rings which stack back to back to give a disk-like structure with a central cavity, resembling the structure of eukaryotic proteasomes.

The protein resides in the cytoplasm. The catalysed reaction is Hydrolysis of proteins to small peptides in the presence of ATP and magnesium. alpha-casein is the usual test substrate. In the absence of ATP, only oligopeptides shorter than five residues are hydrolyzed (such as succinyl-Leu-Tyr-|-NHMec, and Leu-Tyr-Leu-|-Tyr-Trp, in which cleavage of the -Tyr-|-Leu- and -Tyr-|-Trp bonds also occurs).. Its function is as follows. Cleaves peptides in various proteins in a process that requires ATP hydrolysis. Has a chymotrypsin-like activity. Plays a major role in the degradation of misfolded proteins. The polypeptide is ATP-dependent Clp protease proteolytic subunit (Borrelia garinii subsp. bavariensis (strain ATCC BAA-2496 / DSM 23469 / PBi) (Borreliella bavariensis)).